The chain runs to 236 residues: Auxin-responsive protein IAA13 (236 aa).

3 disordered regions span residues 1–24, 52–93, and 105–130; these read MAGADVDVGTELRLGLPGGGGGAA, EAAA…WPPV, and SVKSKKEEEADKQQQQPAANASGSNS. The EAR-like (transcriptional repression) motif lies at 12–16; sequence LRLGL. Low complexity predominate over residues 52-61; sequence EAAAGKAEAP. A compositionally biased stretch (basic and acidic residues) spans 62 to 81; it reads AAEKAKRPAEAAAADAEKPP. Low complexity predominate over residues 117-130; sequence QQQQPAANASGSNS. The region spanning 131–218 is the PB1 domain; it reads SAFVKVSMDG…SCKRLRIMKG (88 aa).

Belongs to the Aux/IAA family. As to quaternary structure, homodimers and heterodimers.

It localises to the nucleus. Aux/IAA proteins are short-lived transcriptional factors that function as repressors of early auxin response genes at low auxin concentrations. In Oryza sativa subsp. japonica (Rice), this protein is Auxin-responsive protein IAA13 (IAA13).